The sequence spans 391 residues: MYQTLTITAAQGPLGYDPSPGTFMHSAASSPVYVPTSRVGSMLTSISYLQGTGASQGTHSVNSHWSQATSESSSYSSSSPHPSSRYHYSPSPPMANGSTRDTGYSSSLAVSGRDQYAPLARPLNGSYGSPYTPYMTPQLTSAWPAGPFDNTMLHSLQSRGAPISVRGAPGDVLDELPESRECVNCGSVQTPLWRRDGTGHYLCNACGLYSKMNGLSRPLIKPQKRVPSSRRIGLACANCHTTTTTLWRRNTEGEPVCNACGLYMKLHGVPRPLAMKKEGIQTRKRKPKNLNKSKSSSSNGNSSHHITMTPTSTTSSTNSDDCIKNGSPSQNTAPVVTSSLMSAQQTGSASPDSNILKYTGQDGLYSAVSLSSASEVAASVRQDSWCALALA.

Over residues 57–69 the composition is skewed to polar residues; the sequence is GTHSVNSHWSQAT. The disordered stretch occupies residues 57-107; the sequence is GTHSVNSHWSQATSESSSYSSSSPHPSSRYHYSPSPPMANGSTRDTGYSSS. A compositionally biased stretch (low complexity) spans 70 to 89; that stretch reads SESSSYSSSSPHPSSRYHYS. A compositionally biased stretch (polar residues) spans 96–107; it reads NGSTRDTGYSSS. GATA-type zinc fingers lie at residues 182–206 and 236–260; these read CVNC…CNAC and CANC…CNAC. Residues 277 to 334 form a disordered region; that stretch reads KEGIQTRKRKPKNLNKSKSSSSNGNSSHHITMTPTSTTSSTNSDDCIKNGSPSQNTAP. Positions 282 to 291 are enriched in basic residues; it reads TRKRKPKNLN. Over residues 292–319 the composition is skewed to low complexity; that stretch reads KSKSSSSNGNSSHHITMTPTSTTSSTNS.

In terms of tissue distribution, in embryos, expressed in the presumptive heart mesoderm. In adults, widely distributed but predominant in the heart.

It is found in the nucleus. Functionally, transcriptional activator that binds 5'-GATA-3'-containing motifs within gene promoters. Regulates cardiac-specific transcription during embryogenesis and thereby cardiogenesis. The protein is GATA-binding factor 6-B (gata6-b) of Xenopus laevis (African clawed frog).